We begin with the raw amino-acid sequence, 464 residues long: Armadillo repeat-containing protein 6 homolog (464 aa).

At Thr9 the chain carries Phosphothreonine. 4 ARM repeats span residues 235 to 275 (AHEH…TLAV), 287 to 331 (GGLK…QQGV), 332 to 374 (APII…FDTG), and 375 to 418 (IAEV…ISFG).

This sequence belongs to the ARMC6 family.

This is Armadillo repeat-containing protein 6 homolog from Drosophila melanogaster (Fruit fly).